An 853-amino-acid polypeptide reads, in one-letter code: Leucine-rich repeat and death domain-containing protein 1 (853 aa).

The segment at 1–78 (MSEDGSNVEP…EEKNTGIPFS (78 aa)) is disordered. Over residues 19 to 31 (LEEPGSEISDLLD) the composition is skewed to acidic residues. A compositionally biased stretch (polar residues) spans 56-65 (QSAASFTSQL). LRR repeat units lie at residues 133–157 (MKSD…IVKV), 159–180 (YVKY…DPGD), 183–204 (GLEI…IQLF), 206–227 (NLKI…LLQL), 229–251 (NMRQ…EHLR), 252–274 (YLET…SSLK), 275–297 (NLRI…CFLP), 298–319 (KLNS…VREL), 321–342 (NLES…IFQL), 344–365 (KIKE…IENF), 367–388 (ELRL…ISHC), 390–411 (NLES…IRKL), 413–435 (NLRQ…SHLS), 436–457 (NIHI…IKNC), 459–481 (KITR…CALQ), 482–503 (SLDY…MSFS), 505–527 (QLLH…CSLT), 528–549 (NLEY…ISAM), 551–573 (SLHV…CSLK), 574–596 (NLRV…SKLK), 597–618 (RIQK…LCQL), 620–641 (TLEE…PEEV), 646–668 (QLKI…GELR), 669–690 (SLVS…FLSL), 692–713 (VLQS…IYKL), and 715–736 (SLKE…ICKG). The region spanning 757–845 (LEKIFNIVAN…DIMDKITALN (89 aa)) is the Death domain.

The protein is Leucine-rich repeat and death domain-containing protein 1 (Lrrd1) of Mus musculus (Mouse).